A 502-amino-acid polypeptide reads, in one-letter code: Glycerol kinase (502 aa).

Residue T14 coordinates ADP. ATP-binding residues include T14, T15, and S16. A sn-glycerol 3-phosphate-binding site is contributed by T14. R18 is an ADP binding site. The sn-glycerol 3-phosphate site is built by R84, E85, Y136, and D246. Residues R84, E85, Y136, D246, and Q247 each contribute to the glycerol site. 2 residues coordinate ADP: T268 and G311. The ATP site is built by T268, G311, Q315, and G412. Residues G412 and N416 each coordinate ADP.

This sequence belongs to the FGGY kinase family. Homotetramer and homodimer (in equilibrium). Heterodimer with EIIA-Glc. Binds 1 zinc ion per glycerol kinase EIIA-Glc dimer. The zinc ion is important for dimerization.

The enzyme catalyses glycerol + ATP = sn-glycerol 3-phosphate + ADP + H(+). It functions in the pathway polyol metabolism; glycerol degradation via glycerol kinase pathway; sn-glycerol 3-phosphate from glycerol: step 1/1. With respect to regulation, activity of this regulatory enzyme is affected by several metabolites. Allosterically and non-competitively inhibited by fructose 1,6-bisphosphate (FBP) and unphosphorylated phosphocarrier protein EIIA-Glc (III-Glc), an integral component of the bacterial phosphotransferase (PTS) system. Key enzyme in the regulation of glycerol uptake and metabolism. Catalyzes the phosphorylation of glycerol to yield sn-glycerol 3-phosphate. This is Glycerol kinase from Salmonella typhimurium (strain LT2 / SGSC1412 / ATCC 700720).